The chain runs to 392 residues: MPLSLLQELIKRPSITPQECGIYEIILNKLNSLIQKEHIDTFIIEQEKEGVKNLFYLIAPKGADKSNLHHFCFAGHIDVVPTGEGWEFEPFCGTQDEKYIYGRGTQDMKGGISAFICAVCNILESHNTSSLPIMLSILLTSDEEGEGIYGTKFMLEELKKRDLLPHSCIVAEPTSINHTGDMLKIGRRGSINGTLIIEGKQGHVAYPQKCINPIELLGSKLGALAGIELDNGDSHFAPSKLVITDIRSGMEVVNVTPQNLKIMFNVRNSPLSNEDSIRSYITSILGSLPYELTLKTNSLPFITADDSEIVKSLCAIIERTLGITPQLSTSGGTSDARFFASYGVNVVEIGVPNDRIHAINERVSISDILALHDIFVEFLQLFIKNAKIENLK.

His-76 is a binding site for Zn(2+). Asp-78 is a catalytic residue. Asp-107 is a binding site for Zn(2+). Glu-143 acts as the Proton acceptor in catalysis. Zn(2+) contacts are provided by Glu-144, Glu-172, and His-357.

The protein belongs to the peptidase M20A family. DapE subfamily. As to quaternary structure, homodimer. Zn(2+) is required as a cofactor. The cofactor is Co(2+).

The catalysed reaction is N-succinyl-(2S,6S)-2,6-diaminopimelate + H2O = (2S,6S)-2,6-diaminopimelate + succinate. Its pathway is amino-acid biosynthesis; L-lysine biosynthesis via DAP pathway; LL-2,6-diaminopimelate from (S)-tetrahydrodipicolinate (succinylase route): step 3/3. Catalyzes the hydrolysis of N-succinyl-L,L-diaminopimelic acid (SDAP), forming succinate and LL-2,6-diaminopimelate (DAP), an intermediate involved in the bacterial biosynthesis of lysine and meso-diaminopimelic acid, an essential component of bacterial cell walls. This Helicobacter hepaticus (strain ATCC 51449 / 3B1) protein is Succinyl-diaminopimelate desuccinylase.